A 126-amino-acid chain; its full sequence is Aspartate 1-decarboxylase (126 aa).

S25 acts as the Schiff-base intermediate with substrate; via pyruvic acid in catalysis. S25 is modified (pyruvic acid (Ser)). Position 57 (T57) interacts with substrate. The active-site Proton donor is Y58. 73–75 lines the substrate pocket; that stretch reads GAA.

The protein belongs to the PanD family. Heterooctamer of four alpha and four beta subunits. Requires pyruvate as cofactor. Post-translationally, is synthesized initially as an inactive proenzyme, which is activated by self-cleavage at a specific serine bond to produce a beta-subunit with a hydroxyl group at its C-terminus and an alpha-subunit with a pyruvoyl group at its N-terminus.

It is found in the cytoplasm. It carries out the reaction L-aspartate + H(+) = beta-alanine + CO2. The protein operates within cofactor biosynthesis; (R)-pantothenate biosynthesis; beta-alanine from L-aspartate: step 1/1. Functionally, catalyzes the pyruvoyl-dependent decarboxylation of aspartate to produce beta-alanine. In Edwardsiella ictaluri (strain 93-146), this protein is Aspartate 1-decarboxylase.